Reading from the N-terminus, the 121-residue chain is Group 1 truncated hemoglobin (121 aa).

N-acetylmethionine is present on Met-1. A heme-binding site is contributed by His-73.

This sequence belongs to the truncated hemoglobin family. Group I subfamily. Monomer. It depends on heme as a cofactor.

This is Group 1 truncated hemoglobin from Tetrahymena thermophila.